The sequence spans 208 residues: MLYIYMHFPNPDTVTGNLIFQVLDKTVEMSSEQLHKLFTKHRSEFFTEIAALLKLNFIVIVDRYIWSGLAYAQADGITIETKDTFKPDYTFFLSSNKPLKEKPFNIQRLFEEKDKQEIIFNNFITIMNDVPKNKFCIIPAHLNKEIIYNIVLTKTLKVFDNNSCLKYIKMYDDKYLNVQDLNLIDFDWQKCIEDNNDKEEYDDNNFIV.

It belongs to the thymidylate kinase family.

In terms of biological role, catalyzes the conversion of dTMP to dTDP. The protein is Truncated thymidylate kinase (TMK) of Ornithodoros (relapsing fever ticks).